Consider the following 360-residue polypeptide: Inhibin alpha chain (360 aa).

A signal peptide spans 1–17; the sequence is MWLQLLLLLLAPQGGHG. A propeptide spanning residues 18–60 is cleaved from the precursor; that stretch reads CHGLELDRELVLAKVRALFLDALGPPPVTGEGGDPGVRRLHRR. Positions 61-226 are cleaved as a propeptide — inhibin alpha N-terminal region; it reads HAVGGFMRRG…PPSGGERARR (166 aa). N-linked (GlcNAc...) asparagine glycans are attached at residues Asn140 and Asn262. Disulfide bonds link Cys256–Cys322, Cys285–Cys357, and Cys289–Cys359.

This sequence belongs to the TGF-beta family. Dimeric, linked by one or more disulfide bonds. Activin B is a dimer of alpha and beta-B. Inhibin A is a dimer of alpha and beta-A. Inhibin B is a dimer of alpha and beta-B. Interacts with TGFBR3L; this interaction regulates female fertility. Post-translationally, proteolytic processing yields a number of bioactive forms, consisting either solely of the mature alpha chain, of the most N-terminal propeptide linked through a disulfide bond to the mature alpha chain, or of the entire proprotein.

Its subcellular location is the secreted. Functionally, inhibins and activins inhibit and activate, respectively, the secretion of follitropin by the pituitary gland. Inhibins/activins are involved in regulating a number of diverse functions such as hypothalamic and pituitary hormone secretion, gonadal hormone secretion, germ cell development and maturation, erythroid differentiation, insulin secretion, nerve cell survival, embryonic axial development or bone growth, depending on their subunit composition. Inhibins appear to oppose the functions of activins. Inhibin A is a dimer of alpha/INHA and beta-A/INHBA that functions as a feedback regulator in the hypothalamic-pituitary-gonadal (HPG) axis. Inhibits the secretion of FSH from the anterior pituitary gland by acting on pituitary gonadotrope cells. Antagonizes activin A by binding to the proteoglycan, betaglycan, and forming a stable complex with and, thereby, sequestering type II activin receptors while excluding type I receptor. Its function is as follows. Inhibin B is a dimer of alpha and beta-B that plays a crucial role in the regulation of the reproductive system by inhibiting the secretion of follicle-stimulating hormone (FSH) from the anterior pituitary gland. Thereby, maintains reproductive homeostasis in both males and females. Acts as a more potent suppressor of FSH release than inhibin A. Functions as competitive receptor antagonist binding activin type II receptors with high affinity in the presence of the TGF-beta type III coreceptor/TGFBR3L. This is Inhibin alpha chain (INHA) from Bos taurus (Bovine).